Here is a 234-residue protein sequence, read N- to C-terminus: Orotidine 5'-phosphate decarboxylase (234 aa).

Substrate is bound by residues Asp11, Lys33, 60 to 69 (DLKFHDIPNT), Thr120, Arg181, Gln190, Gly210, and Arg211. The Proton donor role is filled by Lys62.

It belongs to the OMP decarboxylase family. Type 1 subfamily. As to quaternary structure, homodimer.

The catalysed reaction is orotidine 5'-phosphate + H(+) = UMP + CO2. It participates in pyrimidine metabolism; UMP biosynthesis via de novo pathway; UMP from orotate: step 2/2. Its function is as follows. Catalyzes the decarboxylation of orotidine 5'-monophosphate (OMP) to uridine 5'-monophosphate (UMP). This Shewanella sediminis (strain HAW-EB3) protein is Orotidine 5'-phosphate decarboxylase.